The sequence spans 238 residues: Ribonuclease PH (238 aa).

Phosphate-binding positions include Arg86 and 124–126; that span reads GTR.

This sequence belongs to the RNase PH family. As to quaternary structure, homohexameric ring arranged as a trimer of dimers.

The enzyme catalyses tRNA(n+1) + phosphate = tRNA(n) + a ribonucleoside 5'-diphosphate. Functionally, phosphorolytic 3'-5' exoribonuclease that plays an important role in tRNA 3'-end maturation. Removes nucleotide residues following the 3'-CCA terminus of tRNAs; can also add nucleotides to the ends of RNA molecules by using nucleoside diphosphates as substrates, but this may not be physiologically important. Probably plays a role in initiation of 16S rRNA degradation (leading to ribosome degradation) during starvation. The protein is Ribonuclease PH of Trichlorobacter lovleyi (strain ATCC BAA-1151 / DSM 17278 / SZ) (Geobacter lovleyi).